The primary structure comprises 210 residues: Inner membrane-spanning protein YciB (210 aa).

6 helical membrane-spanning segments follow: residues 12 to 32 (EVSPLLKLVLELGPLMVFFFA), 53 to 73 (IFIATGLFMAATAAALAVSWM), 78 to 98 (LPMMPLISGIVVFVFGALTLW), 115 to 135 (LFGAILLGGLLFGKSLLGYVF), 153 to 173 (WGVFFLFLAVLNEVIWRSFST), and 175 to 195 (FWVAFKVWGTMPITILFTLAQ).

It belongs to the YciB family.

Its subcellular location is the cell inner membrane. Functionally, plays a role in cell envelope biogenesis, maintenance of cell envelope integrity and membrane homeostasis. This is Inner membrane-spanning protein YciB from Sinorhizobium medicae (strain WSM419) (Ensifer medicae).